We begin with the raw amino-acid sequence, 945 residues long: Isoleucine--tRNA ligase (945 aa).

Positions 66 to 76 match the 'HIGH' region motif; it reads PYANGDIHLGH. Glu-581 is an L-isoleucyl-5'-AMP binding site. The 'KMSKS' region signature appears at 622–626; it reads KMSKS. Residue Lys-625 coordinates ATP. Residues Cys-908, Cys-911, Cys-928, and Cys-931 each contribute to the Zn(2+) site.

The protein belongs to the class-I aminoacyl-tRNA synthetase family. IleS type 1 subfamily. As to quaternary structure, monomer. The cofactor is Zn(2+).

It is found in the cytoplasm. The enzyme catalyses tRNA(Ile) + L-isoleucine + ATP = L-isoleucyl-tRNA(Ile) + AMP + diphosphate. Catalyzes the attachment of isoleucine to tRNA(Ile). As IleRS can inadvertently accommodate and process structurally similar amino acids such as valine, to avoid such errors it has two additional distinct tRNA(Ile)-dependent editing activities. One activity is designated as 'pretransfer' editing and involves the hydrolysis of activated Val-AMP. The other activity is designated 'posttransfer' editing and involves deacylation of mischarged Val-tRNA(Ile). The chain is Isoleucine--tRNA ligase from Burkholderia ambifaria (strain MC40-6).